The primary structure comprises 314 residues: MAGNSKRRGAVRKAGTKKGPTVGSGGVRRRGLEGRGATPPAHQRPNHPAAKRAAKAAKQQQRRPARKTDETELVLGRNPVVECLRAEVPATALYVAMGTEADERVTEAVQIAADNGISILEVPRSDLDRMSNNALHQGLGLQVPPYDYAHPDDLLATAKADGAPALLVALDNISDPRNLGAIVRSVAAFGGHGVLIPQRRSASVTAVAWRTSAGAAARLPVARATNLNRTLKSWADGGLQVVGLDADGDTTLDELDGTGPVVVVVGSEGKGLSRLVRENCDAVVSIPMAGPTESLNASVAAGVVLAEIARQRRS.

Composition is skewed to basic residues over residues 1–16 (MAGN…KAGT) and 49–65 (AAKR…RRPA). The tract at residues 1–73 (MAGNSKRRGA…PARKTDETEL (73 aa)) is disordered. S-adenosyl-L-methionine contacts are provided by Gly266, Ile286, and Leu295.

It belongs to the class IV-like SAM-binding methyltransferase superfamily. RNA methyltransferase TrmH family.

This is an uncharacterized protein from Mycobacterium sp. (strain KMS).